The following is an 865-amino-acid chain: Probable beta-glucosidase J (865 aa).

Asp233 is a catalytic residue. Asn330, Asn447, Asn503, and Asn764 each carry an N-linked (GlcNAc...) asparagine glycan. Residues 411–579 (TGQPGYTFRV…DTDTAIQQAV (169 aa)) enclose the PA14 domain.

It belongs to the glycosyl hydrolase 3 family.

The protein localises to the secreted. The catalysed reaction is Hydrolysis of terminal, non-reducing beta-D-glucosyl residues with release of beta-D-glucose.. It functions in the pathway glycan metabolism; cellulose degradation. Functionally, beta-glucosidases are one of a number of cellulolytic enzymes involved in the degradation of cellulosic biomass. Catalyzes the last step releasing glucose from the inhibitory cellobiose. This is Probable beta-glucosidase J (bglJ) from Aspergillus fumigatus (strain CBS 144.89 / FGSC A1163 / CEA10) (Neosartorya fumigata).